We begin with the raw amino-acid sequence, 1076 residues long: JmjC domain-containing histone demethylation protein 1 (1076 aa).

The region spanning 93-265 (FSQTPLEDLV…TQLRVYQVEN (173 aa)) is the JmjC domain. Thr-159 lines the substrate pocket. His-162 and Asp-164 together coordinate Fe cation. A substrate-binding site is contributed by Lys-179. Residue His-233 participates in Fe cation binding. Disordered regions lie at residues 598 to 748 (FEEE…DPVV) and 789 to 1056 (KIEP…KIPS). Positions 610 to 634 (DQEEEEYDAEEPEDQEEEEEDEYQA) are enriched in acidic residues. The segment covering 653–680 (AKNDESEEVSVKKDKKEKMEKVEKDEKR) has biased composition (basic and acidic residues). Residues 681–698 (RNSKSKKDKISKEKKKKE) are compositionally biased toward basic residues. 2 stretches are compositionally biased toward basic and acidic residues: residues 699–714 (RERI…ELRA) and 789–811 (KIEP…EPEH). The span at 935–946 (ASAPSSRHSSIS) shows a compositional bias: low complexity. Composition is skewed to polar residues over residues 957-990 (FNSS…SINR) and 1004-1019 (DSLS…TYPT). The span at 1044–1056 (QHHDDGHKHKIPS) shows a compositional bias: basic and acidic residues.

Belongs to the JHDM1 histone demethylase family. It depends on Fe(2+) as a cofactor.

The protein resides in the nucleus. The catalysed reaction is N(6),N(6)-dimethyl-L-lysyl(36)-[histone H3] + 2 2-oxoglutarate + 2 O2 = L-lysyl(36)-[histone H3] + 2 formaldehyde + 2 succinate + 2 CO2. Its function is as follows. Histone demethylase that specifically demethylates 'Lys-36' of histone H3, thereby playing a central role in histone code. Has a role in regulating lifespan. The protein is JmjC domain-containing histone demethylation protein 1 (jhdm-1) of Caenorhabditis elegans.